The sequence spans 1047 residues: Jouberin (1047 aa).

3 stretches are compositionally biased toward basic and acidic residues: residues 1 to 17 (MEPE…EKVR), 29 to 40 (SREKTGIEEKGE), and 77 to 86 (LLHDDKLASE). Disordered stretches follow at residues 1–40 (MEPE…EKGE) and 67–181 (EQLT…SRDS). Residues 1–284 (MEPETPEKVD…IFNENFPYLL (284 aa)) form an interaction with HAP1 region. Positions 96–106 (PVPTKPESSPS) are enriched in low complexity. Over residues 115–138 (GEQKKEGTPEDSQHMEGICSREQD) the composition is skewed to basic and acidic residues. The segment covering 149 to 159 (PKPKKTKKKTK) has biased composition (basic residues). Basic and acidic residues predominate over residues 172-181 (GVHEITSRDS). 7 WD repeats span residues 457-499 (AGER…FMRE), 502-541 (GHLN…TSTF), 545-585 (PHPS…DAAI), 592-631 (VHKS…NDVQ), 648-687 (FRGV…ARKF), 691-730 (ANYR…QVAM), and 735-776 (PFKS…AQQE). S853 carries the phosphoserine modification. The SH3 domain maps to 902–962 (DPPPMVVALY…PANHVASETL (61 aa)). Composition is skewed to basic and acidic residues over residues 963 to 987 (YRDS…KPEK) and 1013 to 1040 (HSEK…EPVV). Positions 963–1047 (YRDSPPKVKE…PVVRKVTLIE (85 aa)) are disordered. Phosphoserine is present on S974.

As to quaternary structure, self-associates. Part of the tectonic-like complex (also named B9 complex). Interacts with MKS1. Interacts with NPHP1; probably as heterodimers and/or AHI1(2):NPHP1(2) heterotetramers. Interacts (via SH3 domain) with the dynamin GTPase DNM2. Interacts with HAP1; probably as AHI1(2):HAP1(2) heterotetramers. Interacts with RAB8A. Interacts with CEND1. Interacts with SPATA7. As to expression, expressed in the retina (at protein level). Highly expressed in the brain. Highly expressed in the testis. Expressed in the kidney, thymus, heart, lung, spleen. Weakly expressed in the liver, stomach, pancreas, and embryo. Strongly expressed during periods of both cortical and cerebellar development.

The protein localises to the cytoplasm. It localises to the cytoskeleton. It is found in the cilium basal body. The protein resides in the microtubule organizing center. Its subcellular location is the centrosome. The protein localises to the centriole. It localises to the cell junction. It is found in the adherens junction. Involved in vesicle trafficking and required for ciliogenesis, formation of primary non-motile cilium, and recruitment of RAB8A to the basal body of primary cilium. Component of the tectonic-like complex, a complex localized at the transition zone of primary cilia and acting as a barrier that prevents diffusion of transmembrane proteins between the cilia and plasma membranes. Involved in neuronal differentiation. As a positive modulator of classical Wnt signaling, may play a crucial role in ciliary signaling during cerebellum embryonic development. In Mus musculus (Mouse), this protein is Jouberin (Ahi1).